The sequence spans 738 residues: Putative cyclic nucleotide-gated ion channel 7 (738 aa).

Topologically, residues Met-1–Leu-104 are cytoplasmic. Residues Phe-105–Val-125 form a helical membrane-spanning segment. Residues Asp-126–Leu-139 lie on the Extracellular side of the membrane. A helical membrane pass occupies residues Ala-140 to Leu-160. Topologically, residues Gln-161–Arg-193 are cytoplasmic. A helical transmembrane segment spans residues Tyr-194–Leu-214. Residues His-215–Thr-227 lie on the Extracellular side of the membrane. Residues Ala-228–Thr-248 form a helical membrane-spanning segment. Over Ser-249–Tyr-268 the chain is Cytoplasmic. Residues Tyr-269–Val-289 traverse the membrane as a helical segment. Topologically, residues Glu-290–Pro-395 are extracellular. Residues Gly-396 to Ile-416 form a helical membrane-spanning segment. The Cytoplasmic portion of the chain corresponds to Gly-417–Glu-738. A nucleoside 3',5'-cyclic phosphate contacts are provided by residues Leu-502–Phe-632 and Glu-573. The tract at residues Phe-618 to Tyr-633 is calmodulin-binding. One can recognise an IQ domain in the interval Arg-638–Glu-667. Disordered stretches follow at residues Gly-671–Ser-693 and Leu-715–Glu-738.

The protein belongs to the cyclic nucleotide-gated cation channel (TC 1.A.1.5) family. As to quaternary structure, homotetramer or heterotetramer.

It is found in the cell membrane. In terms of biological role, putative cyclic nucleotide-gated ion channel. The sequence is that of Putative cyclic nucleotide-gated ion channel 7 (CNGC7) from Arabidopsis thaliana (Mouse-ear cress).